The chain runs to 476 residues: Aspartyl/glutamyl-tRNA(Asn/Gln) amidotransferase subunit B (476 aa).

The protein belongs to the GatB/GatE family. GatB subfamily. In terms of assembly, heterotrimer of A, B and C subunits.

The enzyme catalyses L-glutamyl-tRNA(Gln) + L-glutamine + ATP + H2O = L-glutaminyl-tRNA(Gln) + L-glutamate + ADP + phosphate + H(+). The catalysed reaction is L-aspartyl-tRNA(Asn) + L-glutamine + ATP + H2O = L-asparaginyl-tRNA(Asn) + L-glutamate + ADP + phosphate + 2 H(+). In terms of biological role, allows the formation of correctly charged Asn-tRNA(Asn) or Gln-tRNA(Gln) through the transamidation of misacylated Asp-tRNA(Asn) or Glu-tRNA(Gln) in organisms which lack either or both of asparaginyl-tRNA or glutaminyl-tRNA synthetases. The reaction takes place in the presence of glutamine and ATP through an activated phospho-Asp-tRNA(Asn) or phospho-Glu-tRNA(Gln). In Geobacillus kaustophilus (strain HTA426), this protein is Aspartyl/glutamyl-tRNA(Asn/Gln) amidotransferase subunit B.